The chain runs to 295 residues: ATP-dependent (S)-NAD(P)H-hydrate dehydratase (295 aa).

The YjeF C-terminal domain maps to 9–289; that stretch reads LLERARNLVP…DQIHQVFDDL (281 aa). (6S)-NADPHX-binding positions include Gly-109 and 162–168; that span reads NAIEFCR. ATP contacts are provided by residues 193–197 and 214–223; these read KGLND and GSGRRCGGQG. Asp-224 contacts (6S)-NADPHX.

This sequence belongs to the NnrD/CARKD family. It depends on Mg(2+) as a cofactor.

It carries out the reaction (6S)-NADHX + ATP = ADP + phosphate + NADH + H(+). It catalyses the reaction (6S)-NADPHX + ATP = ADP + phosphate + NADPH + H(+). In terms of biological role, catalyzes the dehydration of the S-form of NAD(P)HX at the expense of ATP, which is converted to ADP. Together with NAD(P)HX epimerase, which catalyzes the epimerization of the S- and R-forms, the enzyme allows the repair of both epimers of NAD(P)HX, a damaged form of NAD(P)H that is a result of enzymatic or heat-dependent hydration. The chain is ATP-dependent (S)-NAD(P)H-hydrate dehydratase from Anopheles darlingi (Mosquito).